A 256-amino-acid polypeptide reads, in one-letter code: MLRIADKTFDSHLFTGTGKFASSQLMVEAIRASGSQLVTLAMKRVDLRQHNDAILAPLIDAGVTLLPNTSGAKTAEEAIFAAQLAREALGTHWLKLEIHPDARWLLPDPVETLKAAEALVKQGFVVLPYCGADPVLCKRLEEVGCAAVMPLGAPIGSNQGLETRAMLEIIIQQATVPVVVDAGIGVPSHATQALEMGADAVLVNTAIAVADDPVMMAQAFRLAVEAGVMARRAVPGTRSSYAQATSPLTGFLEASA.

Catalysis depends on Lys-95, which acts as the Schiff-base intermediate with DXP. Residues Gly-156, 182 to 183 (AG), and 204 to 205 (NT) contribute to the 1-deoxy-D-xylulose 5-phosphate site.

This sequence belongs to the ThiG family. In terms of assembly, homotetramer. Forms heterodimers with either ThiH or ThiS.

The protein localises to the cytoplasm. It carries out the reaction [ThiS sulfur-carrier protein]-C-terminal-Gly-aminoethanethioate + 2-iminoacetate + 1-deoxy-D-xylulose 5-phosphate = [ThiS sulfur-carrier protein]-C-terminal Gly-Gly + 2-[(2R,5Z)-2-carboxy-4-methylthiazol-5(2H)-ylidene]ethyl phosphate + 2 H2O + H(+). It functions in the pathway cofactor biosynthesis; thiamine diphosphate biosynthesis. In terms of biological role, catalyzes the rearrangement of 1-deoxy-D-xylulose 5-phosphate (DXP) to produce the thiazole phosphate moiety of thiamine. Sulfur is provided by the thiocarboxylate moiety of the carrier protein ThiS. In vitro, sulfur can be provided by H(2)S. The chain is Thiazole synthase from Citrobacter koseri (strain ATCC BAA-895 / CDC 4225-83 / SGSC4696).